The chain runs to 563 residues: Tripeptidyl-peptidase 1 (563 aa).

The N-terminal stretch at 1 to 19 (MGPRSGLLGLFALFVAGKC) is a signal peptide. Residues 20-195 (SYSPEPDQQR…PEPQVPGTVG (176 aa)) constitute a propeptide, removed in mature form. A disulfide bond links Cys111 and Cys122. The region spanning 199-563 (GVTPSVIRKR…PALLKTLMNP (365 aa)) is the Peptidase S53 domain. Asn210 and Asn222 each carry an N-linked (GlcNAc...) asparagine glycan. Residues Glu272 and Asp276 each act as charge relay system in the active site. N-linked (GlcNAc...) asparagine glycans are attached at residues Asn286, Asn313, and Asn443. Cystine bridges form between Cys365-Cys526 and Cys522-Cys537. Ser475 functions as the Charge relay system in the catalytic mechanism. Residues Asp517 and Val518 each contribute to the Ca(2+) site. 3 residues coordinate Ca(2+): Gly539, Gly541, and Asp543.

In terms of assembly, monomer. Interacts with CLN5. Interacts with CLN3. It depends on Ca(2+) as a cofactor. In terms of processing, activated by autocatalytic proteolytical processing upon acidification. N-glycosylation is required for processing and activity.

It is found in the lysosome. Its subcellular location is the melanosome. The catalysed reaction is Release of an N-terminal tripeptide from a polypeptide, but also has endopeptidase activity.. In terms of biological role, lysosomal serine protease with tripeptidyl-peptidase I activity. May act as a non-specific lysosomal peptidase which generates tripeptides from the breakdown products produced by lysosomal proteinases. Requires substrates with an unsubstituted N-terminus. In Bos taurus (Bovine), this protein is Tripeptidyl-peptidase 1 (TPP1).